Consider the following 191-residue polypeptide: Prostaglandin-H2 D-isomerase (191 aa).

Positions 1-24 are cleaved as a signal peptide; that stretch reads MGALCTLWLGLVLLGVLGALQTSA. Gln25 carries the pyrrolidone carboxylic acid modification. A glycan (N-linked (GlcNAc...) asparagine) is linked at Asn51. Cys65 (nucleophile) is an active-site residue. A glycan (N-linked (GlcNAc...) asparagine) is linked at Asn78. Residues Cys89 and Cys186 are joined by a disulfide bond.

This sequence belongs to the calycin superfamily. Lipocalin family. As to quaternary structure, monomer. Post-translationally, N- and O-glycosylated. Both N-glycosylation recognition sites are almost quantitatively occupied by N-glycans of the biantennary complex type, with a considerable proportion of structures bearing a bisecting GlcNAc. N-glycan at Asn-78: dHex1Hex5HexNAc4. Agalacto structure as well as sialylated and nonsialylated oligosaccharides bearing alpha2-3- and/or alpha2-6-linked NeuNAc are present.

Its subcellular location is the rough endoplasmic reticulum. It localises to the nucleus membrane. The protein resides in the golgi apparatus. The protein localises to the cytoplasm. It is found in the perinuclear region. Its subcellular location is the secreted. It catalyses the reaction prostaglandin H2 = prostaglandin D2. Functionally, catalyzes the conversion of PGH2 to PGD2, a prostaglandin involved in smooth muscle contraction/relaxation and a potent inhibitor of platelet aggregation. Involved in a variety of CNS functions, such as sedation, NREM sleep and PGE2-induced allodynia, and may have an anti-apoptotic role in oligodendrocytes. Binds small non-substrate lipophilic molecules, including biliverdin, bilirubin, retinal, retinoic acid and thyroid hormone, and may act as a scavenger for harmful hydrophobic molecules and as a secretory retinoid and thyroid hormone transporter. Possibly involved in development and maintenance of the blood-brain, blood-retina, blood-aqueous humor and blood-testis barrier. It is likely to play important roles in both maturation and maintenance of the central nervous system and male reproductive system. Involved in PLA2G3-dependent maturation of mast cells. PLA2G3 is secreted by immature mast cells and acts on nearby fibroblasts upstream to PTDGS to synthesize PGD2, which in turn promotes mast cell maturation and degranulation via PTGDR. This chain is Prostaglandin-H2 D-isomerase (PTGDS), found in Canis lupus familiaris (Dog).